Consider the following 470-residue polypeptide: 6-phospho-beta-galactosidase (470 aa).

5 residues coordinate D-galactose 6-phosphate: glutamine 19, histidine 116, asparagine 159, glutamate 160, and asparagine 297. The active-site Proton donor is the glutamate 160. Glutamate 375 (nucleophile) is an active-site residue. Serine 430, tryptophan 431, lysine 437, and tyrosine 439 together coordinate D-galactose 6-phosphate.

This sequence belongs to the glycosyl hydrolase 1 family.

It carries out the reaction a 6-phospho-beta-D-galactoside + H2O = D-galactose 6-phosphate + an alcohol. Its pathway is carbohydrate metabolism; lactose degradation; D-galactose 6-phosphate and beta-D-glucose from lactose 6-phosphate: step 1/1. This is 6-phospho-beta-galactosidase from Staphylococcus aureus (strain COL).